The chain runs to 336 residues: Holliday junction branch migration complex subunit RuvB (336 aa).

A large ATPase domain (RuvB-L) region spans residues 4–184; the sequence is ADRLISATGV…FGIVQRLEFY (181 aa). ATP is bound by residues Ile-23, Arg-24, Gly-65, Lys-68, Thr-69, Thr-70, 131-133, Arg-174, Tyr-184, and Arg-221; that span reads EDY. Thr-69 provides a ligand contact to Mg(2+). The interval 185–255 is small ATPAse domain (RuvB-S); that stretch reads NVKDLTDIVS…IAARAMDMLD (71 aa). The tract at residues 258-336 is head domain (RuvB-H); sequence NEGFDFMDRK…HFGLQRPDER (79 aa). DNA is bound by residues Arg-313 and Arg-318.

It belongs to the RuvB family. As to quaternary structure, homohexamer. Forms an RuvA(8)-RuvB(12)-Holliday junction (HJ) complex. HJ DNA is sandwiched between 2 RuvA tetramers; dsDNA enters through RuvA and exits via RuvB. An RuvB hexamer assembles on each DNA strand where it exits the tetramer. Each RuvB hexamer is contacted by two RuvA subunits (via domain III) on 2 adjacent RuvB subunits; this complex drives branch migration. In the full resolvosome a probable DNA-RuvA(4)-RuvB(12)-RuvC(2) complex forms which resolves the HJ.

Its subcellular location is the cytoplasm. The catalysed reaction is ATP + H2O = ADP + phosphate + H(+). The RuvA-RuvB-RuvC complex processes Holliday junction (HJ) DNA during genetic recombination and DNA repair, while the RuvA-RuvB complex plays an important role in the rescue of blocked DNA replication forks via replication fork reversal (RFR). RuvA specifically binds to HJ cruciform DNA, conferring on it an open structure. The RuvB hexamer acts as an ATP-dependent pump, pulling dsDNA into and through the RuvAB complex. RuvB forms 2 homohexamers on either side of HJ DNA bound by 1 or 2 RuvA tetramers; 4 subunits per hexamer contact DNA at a time. Coordinated motions by a converter formed by DNA-disengaged RuvB subunits stimulates ATP hydrolysis and nucleotide exchange. Immobilization of the converter enables RuvB to convert the ATP-contained energy into a lever motion, pulling 2 nucleotides of DNA out of the RuvA tetramer per ATP hydrolyzed, thus driving DNA branch migration. The RuvB motors rotate together with the DNA substrate, which together with the progressing nucleotide cycle form the mechanistic basis for DNA recombination by continuous HJ branch migration. Branch migration allows RuvC to scan DNA until it finds its consensus sequence, where it cleaves and resolves cruciform DNA. The protein is Holliday junction branch migration complex subunit RuvB of Aeromonas salmonicida (strain A449).